We begin with the raw amino-acid sequence, 442 residues long: Serine hydroxymethyltransferase (442 aa).

Pyridoxal 5'-phosphate-binding positions include tyrosine 54, 100 to 102, and histidine 236; that span reads SGS. Cysteine 125 and cysteine 364 form a disulfide bridge. Lysine 237 carries the N6-(pyridoxal phosphate)lysine modification. Glycine 272 serves as a coordination point for pyridoxal 5'-phosphate.

This sequence belongs to the SHMT family. In terms of assembly, homodimer. Requires pyridoxal 5'-phosphate as cofactor.

It is found in the cytoplasm. It localises to the mitochondrion matrix. The protein resides in the plastid. Its subcellular location is the apicoplast. The protein localises to the nucleus. It catalyses the reaction (6R)-5,10-methylene-5,6,7,8-tetrahydrofolate + glycine + H2O = (6S)-5,6,7,8-tetrahydrofolate + L-serine. Its pathway is one-carbon metabolism; tetrahydrofolate interconversion. Redox regulation; active in reducing conditions, inactive in oxidizing conditions. The reduction of the cysteine pairs allows the access binding of the tetrahydrofolate substrate to its binding site. This mechanism appears to be unique to Plasmodium species. In terms of biological role, catalyzes the interconversion of serine to glycine accompanied with the production of 5,10-methylenetetrahydrofolate, a source of one-carbon units used by thymidylate synthase to convert dUMP to dTMP for DNA synthesis. Binds to its own mRNA and to the mRNA of bifunctional dihydrofolate reductase-thymidylate synthase (DHFR-TS) in vitro; the physiological relevance of this interaction is not clear. This is Serine hydroxymethyltransferase from Plasmodium falciparum (isolate 3D7).